Here is a 416-residue protein sequence, read N- to C-terminus: Serine hydroxymethyltransferase (416 aa).

Residues leucine 117 and 121–123 (GHL) each bind (6S)-5,6,7,8-tetrahydrofolate. Position 225 is an N6-(pyridoxal phosphate)lysine (lysine 225). 351–353 (SPF) lines the (6S)-5,6,7,8-tetrahydrofolate pocket.

The protein belongs to the SHMT family. Homodimer. Requires pyridoxal 5'-phosphate as cofactor.

The protein resides in the cytoplasm. The catalysed reaction is (6R)-5,10-methylene-5,6,7,8-tetrahydrofolate + glycine + H2O = (6S)-5,6,7,8-tetrahydrofolate + L-serine. It participates in one-carbon metabolism; tetrahydrofolate interconversion. It functions in the pathway amino-acid biosynthesis; glycine biosynthesis; glycine from L-serine: step 1/1. In terms of biological role, catalyzes the reversible interconversion of serine and glycine with tetrahydrofolate (THF) serving as the one-carbon carrier. This reaction serves as the major source of one-carbon groups required for the biosynthesis of purines, thymidylate, methionine, and other important biomolecules. Also exhibits THF-independent aldolase activity toward beta-hydroxyamino acids, producing glycine and aldehydes, via a retro-aldol mechanism. In Blochmanniella pennsylvanica (strain BPEN), this protein is Serine hydroxymethyltransferase.